Here is a 708-residue protein sequence, read N- to C-terminus: ABC transporter G family member 18 (708 aa).

The 243-residue stretch at 75 to 317 (RRRFDFSRRK…FSSFGRPIPE (243 aa)) folds into the ABC transporter domain. An ATP-binding site is contributed by 109-116 (GGSGAGKS). The region spanning 402–612 (AETFILAKRY…PYEAVLINEF (211 aa)) is the ABC transmembrane type-2 domain. The next 7 membrane-spanning stretches (helical) occupy residues 421-441 (LIGMRIGTVMVTGLLLATVYW), 456-476 (FFAFGMSTMFYCCADNIPVFI), 508-528 (LLALSIAFAATTFWTVGLSGG), 537-557 (LIIYAAFWSGSSIVTFISGLI), 560-580 (VMMSYMVTIAYLSYCLLLGGF), 589-609 (LYWIWFHYISLLKYPYEAVLI), and 681-701 (LWITLAWGLFFRILFYLSLLF).

This sequence belongs to the ABC transporter superfamily. ABCG family. Eye pigment precursor importer (TC 3.A.1.204) subfamily.

It localises to the membrane. This Arabidopsis thaliana (Mouse-ear cress) protein is ABC transporter G family member 18 (ABCG18).